Here is a 547-residue protein sequence, read N- to C-terminus: Varicidin biosynthesis cluster MFS-type transporer (547 aa).

Residues 1 to 17 (MTTSTSKNAISKSSQED) are compositionally biased toward polar residues. The disordered stretch occupies residues 1–33 (MTTSTSKNAISKSSQEDLCSDTKDKGSSGGGNE). 11 consecutive transmembrane segments (helical) span residues 47-67 (LVLLFVGLALSVFCLSLVCIS), 156-176 (LAPSLLLPGLCPCIVAQSVFT), 183-203 (WCFWINLPLGGVTAVAVFLFV), 224-244 (ALGTCILMPLIICLLLALQWG), 252-272 (SWRVVLCLVLFTVLLVAWLYV), 296-316 (ILFTFGINGSMFIIVYYVPIW), 330-350 (INFLACSGSMSVAAIIAGTLV), 360-382 (GQWRIFNYTTLVSIATGLIWRYN), 392-412 (AGTLVMFGFGAGSGMQMPFIA), 422-442 (ISLGSSLIILIQTMGGAVFLA), and 503-523 (CFLVCIVLACLTIIADAGMEW).

It belongs to the major facilitator superfamily. TCR/Tet family.

It is found in the cell membrane. Its function is as follows. MFS-type transporer; part of the gene cluster that mediates the biosynthesis of varicidin A, an antifungal natural product containing a cis-octahydrodecalin core. This Talaromyces variabilis (Penicillium variabile) protein is Varicidin biosynthesis cluster MFS-type transporer.